Consider the following 106-residue polypeptide: NADH-quinone oxidoreductase subunit K (106 aa).

3 helical membrane passes run 8–28 (IGIE…VFGV), 35–55 (IIVF…FVAF), and 66–86 (VFVF…LAIL).

Belongs to the complex I subunit 4L family. NDH-1 is composed of 14 different subunits. Subunits NuoA, H, J, K, L, M, N constitute the membrane sector of the complex.

It localises to the cell inner membrane. It carries out the reaction a quinone + NADH + 5 H(+)(in) = a quinol + NAD(+) + 4 H(+)(out). In terms of biological role, NDH-1 shuttles electrons from NADH, via FMN and iron-sulfur (Fe-S) centers, to quinones in the respiratory chain. The immediate electron acceptor for the enzyme in this species is believed to be a menaquinone. Couples the redox reaction to proton translocation (for every two electrons transferred, four hydrogen ions are translocated across the cytoplasmic membrane), and thus conserves the redox energy in a proton gradient. In Flavobacterium johnsoniae (strain ATCC 17061 / DSM 2064 / JCM 8514 / BCRC 14874 / CCUG 350202 / NBRC 14942 / NCIMB 11054 / UW101) (Cytophaga johnsonae), this protein is NADH-quinone oxidoreductase subunit K.